Reading from the N-terminus, the 366-residue chain is tRNA/tmRNA (uracil-C(5))-methyltransferase (366 aa).

Residues glutamine 190, tyrosine 218, asparagine 223, glutamate 239, and aspartate 299 each contribute to the S-adenosyl-L-methionine site. Residue cysteine 324 is the Nucleophile of the active site. Glutamate 358 (proton acceptor) is an active-site residue.

Belongs to the class I-like SAM-binding methyltransferase superfamily. RNA M5U methyltransferase family. TrmA subfamily.

It carries out the reaction uridine(54) in tRNA + S-adenosyl-L-methionine = 5-methyluridine(54) in tRNA + S-adenosyl-L-homocysteine + H(+). The catalysed reaction is uridine(341) in tmRNA + S-adenosyl-L-methionine = 5-methyluridine(341) in tmRNA + S-adenosyl-L-homocysteine + H(+). In terms of biological role, dual-specificity methyltransferase that catalyzes the formation of 5-methyluridine at position 54 (m5U54) in all tRNAs, and that of position 341 (m5U341) in tmRNA (transfer-mRNA). This chain is tRNA/tmRNA (uracil-C(5))-methyltransferase, found in Salmonella typhi.